The following is a 657-amino-acid chain: Glycogen debranching enzyme (657 aa).

Asp336 functions as the Nucleophile in the catalytic mechanism. Glu371 (proton donor) is an active-site residue. Positions 460–479 (ANGEENRDGTNNNYSNNHGK) are disordered.

Belongs to the glycosyl hydrolase 13 family.

The enzyme catalyses Hydrolysis of (1-&gt;6)-alpha-D-glucosidic linkages to branches with degrees of polymerization of three or four glucose residues in limit dextrin.. The protein operates within glycan degradation; glycogen degradation. Removes maltotriose and maltotetraose chains that are attached by 1,6-alpha-linkage to the limit dextrin main chain, generating a debranched limit dextrin. The sequence is that of Glycogen debranching enzyme from Escherichia coli O127:H6 (strain E2348/69 / EPEC).